Reading from the N-terminus, the 341-residue chain is Heat-inducible transcription repressor HrcA (341 aa).

This sequence belongs to the HrcA family.

Functionally, negative regulator of class I heat shock genes (grpE-dnaK-dnaJ and groELS operons). Prevents heat-shock induction of these operons. The protein is Heat-inducible transcription repressor HrcA of Symbiobacterium thermophilum (strain DSM 24528 / JCM 14929 / IAM 14863 / T).